Consider the following 131-residue polypeptide: Ponticulin-like protein M (131 aa).

The signal sequence occupies residues 1–19; it reads MKFLSTLILLLSVLALVRG. Ser106 carries GPI-like-anchor amidated serine lipidation. A propeptide spans 107–131 (removed in mature form); the sequence is NSASSPLTTAVLFVVAFAAAIALLL.

The protein belongs to the ponticulin family. The GPI-like-anchor contains a phosphoceramide group, rather than a phosphatidyl group.

The protein localises to the cell membrane. Functionally, binds F-actin and nucleates actin assembly. The protein is Ponticulin-like protein M (ponM) of Dictyostelium discoideum (Social amoeba).